The primary structure comprises 76 residues: uncharacterized protein (76 aa).

Positions 27-76 are disordered; the sequence is SINNGEGSSVVHRDATAPPTPPVVPTSTLQVPGLQRARTPEPNDPRVANL.

This is an uncharacterized protein from Caenorhabditis elegans.